Reading from the N-terminus, the 198-residue chain is DnaJ homolog subfamily C member 12 (198 aa).

Methionine 1 is modified (N-acetylmethionine). The J domain maps to 14-79; it reads DYYALLGCDE…ESRARYDHWR (66 aa). The disordered stretch occupies residues 114–177; the sequence is EGSGQTFTSS…GLSDLNCGHL (64 aa). Over residues 116–125 the composition is skewed to polar residues; it reads SGQTFTSSVP. Residues 126-156 are compositionally biased toward basic and acidic residues; the sequence is NKERSEQRETKKGDPDSNPEKMKQKEPKFPE. A phosphoserine mark is found at serine 160, serine 166, and serine 182.

As to quaternary structure, interacts with HSPA8. Interacts with TPH1. Interacts with TPH2. Highest levels of expression are detected in kidney, pineal gland, and raphe nuclei in the brain where it localizes to serotonerigic neurons.

It localises to the cytoplasm. Its function is as follows. Probable co-chaperone that participates in the proper folding of biopterin-dependent aromatic amino acid hydroxylases, which include phenylalanine-4-hydroxylase (PAH), tyrosine 3-monooxygenase (TH) and peripheral and neuronal tryptophan hydroxylases (TPH1 and TPH2). This is DnaJ homolog subfamily C member 12 (Dnajc12) from Mus musculus (Mouse).